An 885-amino-acid chain; its full sequence is DNA mismatch repair protein MutS (885 aa).

626 to 633 (GPNMGGKS) lines the ATP pocket.

This sequence belongs to the DNA mismatch repair MutS family.

This protein is involved in the repair of mismatches in DNA. It is possible that it carries out the mismatch recognition step. This protein has a weak ATPase activity. The chain is DNA mismatch repair protein MutS from Burkholderia orbicola (strain MC0-3).